A 153-amino-acid polypeptide reads, in one-letter code: MKDKHSDLVSNRRATHDYEILETFETGIVLQGTEIKSIRDHGATLQDAYVKVIHNELWLIGCNIAHYRFGNIHNHEEKRDRKLLMHKREIKKCKGAIQEKGLALIPLALYLKQGRIKVRIAIAKGKKSFDKRADLKERDDKRQMQQALKQQQY.

The span at 133–143 (ADLKERDDKRQ) shows a compositional bias: basic and acidic residues. Residues 133–153 (ADLKERDDKRQMQQALKQQQY) are disordered. Low complexity predominate over residues 144-153 (MQQALKQQQY).

It belongs to the SmpB family.

It localises to the cytoplasm. In terms of biological role, required for rescue of stalled ribosomes mediated by trans-translation. Binds to transfer-messenger RNA (tmRNA), required for stable association of tmRNA with ribosomes. tmRNA and SmpB together mimic tRNA shape, replacing the anticodon stem-loop with SmpB. tmRNA is encoded by the ssrA gene; the 2 termini fold to resemble tRNA(Ala) and it encodes a 'tag peptide', a short internal open reading frame. During trans-translation Ala-aminoacylated tmRNA acts like a tRNA, entering the A-site of stalled ribosomes, displacing the stalled mRNA. The ribosome then switches to translate the ORF on the tmRNA; the nascent peptide is terminated with the 'tag peptide' encoded by the tmRNA and targeted for degradation. The ribosome is freed to recommence translation, which seems to be the essential function of trans-translation. In Protochlamydia amoebophila (strain UWE25), this protein is SsrA-binding protein.